The primary structure comprises 619 residues: DNA mismatch repair protein MutL (619 aa).

The disordered stretch occupies residues 358-401; sequence GGNQFARPSEAREAATRFSITSSREPAASGGSSGGASWPHAQPG.

The protein belongs to the DNA mismatch repair MutL/HexB family.

In terms of biological role, this protein is involved in the repair of mismatches in DNA. It is required for dam-dependent methyl-directed DNA mismatch repair. May act as a 'molecular matchmaker', a protein that promotes the formation of a stable complex between two or more DNA-binding proteins in an ATP-dependent manner without itself being part of a final effector complex. The chain is DNA mismatch repair protein MutL from Klebsiella pneumoniae (strain 342).